Consider the following 477-residue polypeptide: Bifunctional protein HldE (477 aa).

The ribokinase stretch occupies residues 1–318 (MKVTLPEFER…ENAVRGRADT (318 aa)). Lys179 carries the post-translational modification N6-acetyllysine. An ATP-binding site is contributed by 195–198 (NLSE). The active site involves Asp264. A cytidylyltransferase region spans residues 344–477 (MTNGVFDILH…IKKIQQDKKG (134 aa)).

This sequence in the N-terminal section; belongs to the carbohydrate kinase PfkB family. It in the C-terminal section; belongs to the cytidylyltransferase family. Homodimer.

The enzyme catalyses D-glycero-beta-D-manno-heptose 7-phosphate + ATP = D-glycero-beta-D-manno-heptose 1,7-bisphosphate + ADP + H(+). It catalyses the reaction D-glycero-beta-D-manno-heptose 1-phosphate + ATP + H(+) = ADP-D-glycero-beta-D-manno-heptose + diphosphate. The protein operates within nucleotide-sugar biosynthesis; ADP-L-glycero-beta-D-manno-heptose biosynthesis; ADP-L-glycero-beta-D-manno-heptose from D-glycero-beta-D-manno-heptose 7-phosphate: step 1/4. Its pathway is nucleotide-sugar biosynthesis; ADP-L-glycero-beta-D-manno-heptose biosynthesis; ADP-L-glycero-beta-D-manno-heptose from D-glycero-beta-D-manno-heptose 7-phosphate: step 3/4. It participates in bacterial outer membrane biogenesis; LPS core biosynthesis. Its function is as follows. Catalyzes the phosphorylation of D-glycero-D-manno-heptose 7-phosphate at the C-1 position to selectively form D-glycero-beta-D-manno-heptose-1,7-bisphosphate. In terms of biological role, catalyzes the ADP transfer from ATP to D-glycero-beta-D-manno-heptose 1-phosphate, yielding ADP-D-glycero-beta-D-manno-heptose. The sequence is that of Bifunctional protein HldE from Escherichia coli O157:H7.